A 1691-amino-acid chain; its full sequence is MASWTSPWWVLIGMVFMHSPLPQTTAEKSPGAYFLPEFALSPQGSFLEDTTGEQFLTYRYDDQTSRNTRSDEDKDGNWDAWGDWSDCSRTCGGGASYSLRRCLTGRNCEGQNIRYKTCSNHDCPPDAEDFRAQQCSAYNDVQYQGHYYEWLPRYNDPAAPCALKCHAQGQNLVVELAPKVLDGTRCNTDSLDMCISGICQAVGCDRQLGSNAKEDNCGVCAGDGSTCRLVRGQSKSHVSPEKREENVIAVPLGSRSVRITVKGPAHLFIESKTLQGSKGEHSFNSPGVFLVENTTVEFQRGSERQTFKIPGPLMADFIFKTRYTAAKDSVVQFFFYQPISHQWRQTDFFPCTVTCGGGYQLNSAECVDIRLKRVVPDHYCHYYPENVKPKPKLKECSMDPCPSSDGFKEIMPYDHFQPLPRWEHNPWTACSVSCGGGIQRRSFVCVEESMHGEILQVEEWKCMYAPKPKVMQTCNLFDCPKWIAMEWSQCTVTCGRGLRYRVVLCINHRGEHVGGCNPQLKLHIKEECVIPIPCYKPKEKSPVEAKLPWLKQAQELEETRIATEEPTFIPEPWSACSTTCGPGVQVREVKCRVLLTFTQTETELPEEECEGPKLPTERPCLLEACDESPASRELDIPLPEDSETTYDWEYAGFTPCTATCVGGHQEAIAVCLHIQTQQTVNDSLCDMVHRPPAMSQACNTEPCPPRWHVGSWGPCSATCGVGIQTRDVYCLHPGETPAPPEECRDEKPHALQACNQFDCPPGWHIEEWQQCSRTCGGGTQNRRVTCRQLLTDGSFLNLSDELCQGPKASSHKSCARTDCPPHLAVGDWSKCSVSCGVGIQRRKQVCQRLAAKGRRIPLSEMMCRDLPGLPLVRSCQMPECSKIKSEMKTKLGEQGPQILSVQRVYIQTREEKRINLTIGSRAYLLPNTSVIIKCPVRRFQKSLIQWEKDGRCLQNSKRLGITKSGSLKIHGLAAPDIGVYRCIAGSAQETVVLKLIGTDNRLIARPALREPMREYPGMDHSEANSLGVTWHKMRQMWNNKNDLYLDDDHISNQPFLRALLGHCSNSAGSTNSWELKNKQFEAAVKQGAYSMDTAQFDELIRNMSQLMETGEVSDDLASQLIYQLVAELAKAQPTHMQWRGIQEETPPAAQLRGETGSVSQSSHAKNSGKLTFKPKGPVLMRQSQPPSISFNKTINSRIGNTVYITKRTEVINILCDLITPSEATYTWTKDGTLLQPSVKIILDGTGKIQIQNPTRKEQGIYECSVANHLGSDVESSSVLYAEAPVILSVERNITKPEHNHLSVVVGGIVEAALGANVTIRCPVKGVPQPNITWLKRGGSLSGNVSLLFNGSLLLQNVSLENEGTYVCIATNALGKAVATSVLHLLERRWPESRIVFLQGHKKYILQATNTRTNSNDPTGEPPPQEPFWEPGNWSHCSATCGHLGARIQRPQCVMANGQEVSEALCDHLQKPLAGFEPCNIRDCPARWFTSVWSQCSVSCGEGYHSRQVTCKRTKANGTVQVVSPRACAPKDRPLGRKPCFGHPCVQWEPGNRCPGRCMGRAVRMQQRHTACQHNSSDSNCDDRKRPTLRRNCTSGACDVCWHTGPWKPCTAACGRGFQSRKVDCIHTRSCKPVAKRHCVQKKKPISWRHCLGPSCDRDCTDTTHYCMFVKHLNLCSLDRYKQRCCQSCQEG.

Residues methionine 1–alanine 26 form the signal peptide. A TSP type-1 1 domain is found at aspartate 75–proline 124. Intrachain disulfides connect cysteine 87–cysteine 118, cysteine 91–cysteine 123, and cysteine 102–cysteine 108. The N-linked (GlcNAc...) asparagine glycan is linked to asparagine 293. TSP type-1 domains follow at residues proline 418 to proline 468, aspartate 478 to tyrosine 535, and glutamate 564 to aspartate 626. Disulfide bonds link cysteine 576–cysteine 620, cysteine 580–cysteine 625, and cysteine 591–cysteine 609. Asparagine 681 is a glycosylation site (N-linked (GlcNAc...) asparagine). TSP type-1 domains follow at residues cysteine 703 to proline 760, tryptophan 763 to aspartate 818, and cysteine 819 to serine 881. Asparagine 797 is a glycosylation site (N-linked (GlcNAc...) asparagine). Disulfide bonds link cysteine 831–cysteine 875, cysteine 835–cysteine 880, and cysteine 846–cysteine 863. One can recognise an Ig-like C2-type 1 domain in the interval proline 896 to valine 992. Residues asparagine 915 and asparagine 927 are each glycosylated (N-linked (GlcNAc...) asparagine). The cysteines at positions 934 and 982 are disulfide-linked. N-linked (GlcNAc...) asparagine glycosylation occurs at asparagine 1102. Residues proline 1146–glutamine 1184 form a disordered region. A compositionally biased stretch (polar residues) spans glycine 1156–lysine 1169. Positions proline 1185–leucine 1279 constitute an Ig-like C2-type 2 domain. N-linked (GlcNAc...) asparagine glycosylation is present at asparagine 1191. A disulfide bridge connects residues cysteine 1215 and cysteine 1263. N-linked (GlcNAc...) asparagine glycosylation is found at asparagine 1292, asparagine 1316, asparagine 1330, asparagine 1343, asparagine 1349, asparagine 1356, asparagine 1432, asparagine 1516, asparagine 1574, and asparagine 1591. The Ig-like C2-type 3 domain occupies proline 1296–alanine 1378. Cysteine 1321 and cysteine 1367 are joined by a disulfide. 2 TSP type-1 domains span residues glutamine 1424–aspartate 1482 and cysteine 1483–valine 1545. In terms of domain architecture, TSP type-1 10 spans cysteine 1597–proline 1644. Residues cysteine 1655–glycine 1691 enclose the PLAC domain.

Post-translationally, glycosylated. Can be O-fucosylated by POFUT2 on a serine or a threonine residue found within the consensus sequence C1-X(2)-(S/T)-C2-G of the TSP type-1 repeat domains where C1 and C2 are the first and second cysteine residue of the repeat, respectively. Fucosylated repeats can then be further glycosylated by the addition of a beta-1,3-glucose residue by the glucosyltransferase, B3GALTL. Fucosylation mediates the efficient secretion of ADAMTS family members. Can also be C-glycosylated with one or two mannose molecules on tryptophan residues within the consensus sequence W-X-X-W of the TPRs, and N-glycosylated. These other glycosylations can also facilitate secretion. As to expression, expressed in epithelial cells of the colon, fallopian tube, skin, breast, prostate, epididymis, liver, pancreatic islets and bile ducts, as well as by vascular endothelial cells, smooth muscle cells, fibroblasts, cortical and ganglionic neurons and cardiac myocytes. Also expressed by malignant epithelial cells in colon cancer, as well as breast, prostate, renal and skin tumors. Expression is significantly reduced in colon cancer compared to normal colon.

Its subcellular location is the secreted. It localises to the extracellular space. It is found in the extracellular matrix. The sequence is that of ADAMTS-like protein 3 (ADAMTSL3) from Homo sapiens (Human).